The following is a 515-amino-acid chain: MYRSLRPPTSIPPPPPSGPSPYPAMINGYPPDVPVGSPANGDAELFVPLQRVMPPTGGRNSIRYRNYAPCQNTTKFFYVDNKLSDLDTYNEDANHSNFRTTVIHNQDLDPSTAATETIQLDNRSCWGGELKTAVKTNCPNISSFFQSDTVRVRLMSKRDPGGTDPDAGVNNPPGAEYKWYDLRIPEGNYALNEIIDLLNEGIVQLYLQEGRQNNVLKSDIGVKFDTRYLDLLKDPVTGLVTPGTYVYKGYHPDIILLPGCAVDFTFSRLSLLLGIAKREPYSKGFTITYEDLQGGNVPALLDLSSVQVDDQDEDVIVVADARPLLKDSKGVSYNVITTGVTQPQTAYRSWLLAYHTLDSPARNKTLLTVPDMAGGIGAMYTSMPDTFTAPAGFKEDNTTNLCPVVAMNLFPSFNKVFYQGASAYVQRLENATQSATAAFNRFPENEILKQAPPMNVSSVCDNQPAVVQQGVLPLKNSLSGLQRVLITDDRRRPIPYVYKTIATVQPRVLSSSTLQ.

Residues 1–25 (MYRSLRPPTSIPPPPPSGPSPYPAM) form a disordered region. Positions 9 to 22 (TSIPPPPPSGPSPY) are enriched in pro residues.

Belongs to the adenoviridae penton family. In terms of assembly, interacts with the fiber protein (via N-terminal tail region). Interacts with the capsid vertex protein; this interaction binds the penton base to neighboring peripentonal hexons.

The protein resides in the virion. The protein localises to the host nucleus. Functionally, major capsid protein that self-associates to form penton base pentamers, each in the shape of a pentagon, situated at the 12 vertices of the pseudo T=25 capsid. Involved in virus secondary attachment to host cell after initial attachment by the fiber protein, and in endocytosis of virions. As the virus enters the host cell, penton proteins are shed concomitant with virion acidification in the endosome. This Galliformes (FAdV-1) protein is Penton protein.